Reading from the N-terminus, the 89-residue chain is Signal recognition particle 19 kDa protein (89 aa).

It belongs to the SRP19 family. As to quaternary structure, part of the signal recognition particle protein translocation system, which is composed of SRP and FtsY. Archaeal SRP consists of a 7S RNA molecule of 300 nucleotides and two protein subunits: SRP54 and SRP19.

Its subcellular location is the cytoplasm. Its function is as follows. Involved in targeting and insertion of nascent membrane proteins into the cytoplasmic membrane. Binds directly to 7S RNA and mediates binding of the 54 kDa subunit of the SRP. The chain is Signal recognition particle 19 kDa protein from Methanococcus vannielii (strain ATCC 35089 / DSM 1224 / JCM 13029 / OCM 148 / SB).